The chain runs to 342 residues: Isopentenyl-diphosphate delta-isomerase (342 aa).

A substrate-binding site is contributed by 11–12 (RK). FMN-binding positions include S68, 69 to 71 (SMT), S99, and N127. A substrate-binding site is contributed by 99–101 (SMR). Q162 provides a ligand contact to substrate. E163 serves as a coordination point for Mg(2+). FMN is bound by residues K194, T224, 274–276 (GLK), and 295–296 (AG).

Belongs to the IPP isomerase type 2 family. In terms of assembly, homooctamer. Dimer of tetramers. It depends on FMN as a cofactor. The cofactor is NADPH. Mg(2+) serves as cofactor.

It localises to the cytoplasm. The catalysed reaction is isopentenyl diphosphate = dimethylallyl diphosphate. In terms of biological role, involved in the biosynthesis of isoprenoids. Catalyzes the 1,3-allylic rearrangement of the homoallylic substrate isopentenyl (IPP) to its allylic isomer, dimethylallyl diphosphate (DMAPP). In Rickettsia peacockii (strain Rustic), this protein is Isopentenyl-diphosphate delta-isomerase.